Reading from the N-terminus, the 756-residue chain is Inhibitor of nuclear factor kappa-B kinase subunit beta (756 aa).

Positions 15–300 (WEMKERLGTG…DPVYGPNGCF (286 aa)) constitute a Protein kinase domain. Residues 21–29 (LGTGGFGNV) and Lys44 each bind ATP. The active-site Proton acceptor is the Asp145. Lys163 is covalently cross-linked (Glycyl lysine isopeptide (Lys-Gly) (interchain with G-Cter in ubiquitin)). A Phosphoserine; by TBK1 and PKC/PRKCZ modification is found at Ser177. S-nitrosocysteine is present on Cys179. A Phosphoserine; by TBK1, PKC/PRKCZ and PDPK1 modification is found at Ser181. The residue at position 191 (Pro191) is a Hydroxyproline. Residues 458–479 (LLRNNSCLSKMKNSMASMSQQL) form a leucine-zipper region. A phosphoserine; by autocatalysis mark is found at Ser670, Ser672, Ser675, Ser682, Ser689, Ser697, Ser705, Ser733, and Ser740. The NEMO-binding stretch occupies residues 737–742 (LDWSWL).

It belongs to the protein kinase superfamily. Ser/Thr protein kinase family. I-kappa-B kinase subfamily. As to quaternary structure, component of the I-kappa-B-kinase (IKK) core complex consisting of CHUK, IKBKB and IKBKG; probably four alpha/CHUK-beta/IKBKB dimers are associated with four gamma/IKBKG subunits. The IKK core complex seems to associate with regulatory or adapter proteins to form a IKK-signalosome holo-complex. The IKK complex associates with TERF2IP/RAP1, leading to promote IKK-mediated phosphorylation of RELA/p65. Part of a complex composed of NCOA2, NCOA3, CHUK/IKKA, IKBKB, IKBKG and CREBBP. Part of a 70-90 kDa complex at least consisting of CHUK/IKKA, IKBKB, NFKBIA, RELA, ELP1 and MAP3K14. Found in a membrane raft complex, at least composed of BCL10, CARD11, DPP4 and IKBKB. Interacts with SQSTM1 through PRKCZ or PRKCI. Forms an NGF-induced complex with IKBKB, PRKCI and TRAF6. May interact with MAVS/IPS1. Interacts with NALP2. Interacts with TICAM1. Interacts with FAF1; the interaction disrupts the IKK complex formation. Interacts with ATM. Part of a ternary complex consisting of TANK, IKBKB and IKBKG. Interacts with NIBP; the interaction is direct. Interacts with ARRB1 and ARRB2. Interacts with TRIM21. Interacts with NLRC5; prevents IKBKB phosphorylation and kinase activity. Interacts with PDPK1. Interacts with EIF2AK2/PKR. The phosphorylated form interacts with PPM1A and PPM1B. Interacts with ZNF268; the interaction is further increased in a TNF-alpha-dependent manner. Interacts with IKBKE. Interacts with ZC3H12A. Interacts with AKAP13. Interacts with IFIT5; the interaction synergizes the recruitment of IKK to MAP3K7 and enhances IKK phosphorylation. Interacts with LRRC14; disrupts IKBKB-IKBKG interaction preventing I-kappa-B-kinase (IKK) core complex formation and leading to a decrease of IKBKB phosphorylation and NF-kappaB activation. Interacts with SASH1. Interacts with ARFIP2. Interacts with FKBP5. Post-translationally, upon cytokine stimulation, phosphorylated on Ser-177 and Ser-181 by MEKK1 and/or MAP3K14/NIK as well as TBK1 and PRKCZ; which enhances activity. Phosphorylated by MAP3K7/TAK1 in response to NOD1 and NOD2 signaling, promoting activation and phosphorylation of NF-kappa-B inhibitors, leading to NF-kappa-B activation. Once activated, autophosphorylates on the C-terminal serine cluster; which decreases activity and prevents prolonged activation of the inflammatory response. Phosphorylated by the IKK-related kinases TBK1 and IKBKE, which is associated with reduced CHUK/IKKA and IKBKB activity and NF-kappa-B-dependent gene transcription. Dephosphorylated at Ser-177 and Ser-181 by PPM1A and PPM1B. Ubiquitinated. Monoubiquitination involves TRIM21 that leads to inhibition of Tax-induced NF-kappa-B signaling. 'Ser-163' may not serve as a monoubiquitination site. Ubiquitination on 'Ser-163' may modulate phosphorylation on C-terminal serine residues. In terms of processing, hydroxylated by PHD1/EGLN2, loss of hydroxylation under hypoxic conditions results in activation of NF-kappa-B.

It is found in the cytoplasm. Its subcellular location is the nucleus. The protein resides in the membrane raft. It catalyses the reaction L-seryl-[I-kappa-B protein] + ATP = O-phospho-L-seryl-[I-kappa-B protein] + ADP + H(+). The catalysed reaction is L-seryl-[protein] + ATP = O-phospho-L-seryl-[protein] + ADP + H(+). The enzyme catalyses L-threonyl-[protein] + ATP = O-phospho-L-threonyl-[protein] + ADP + H(+). Serine kinase that plays an essential role in the NF-kappa-B signaling pathway which is activated by multiple stimuli such as inflammatory cytokines, bacterial or viral products, DNA damages or other cellular stresses. Acts as a part of the canonical IKK complex in the conventional pathway of NF-kappa-B activation. Phosphorylates inhibitors of NF-kappa-B on 2 critical serine residues. These modifications allow polyubiquitination of the inhibitors and subsequent degradation by the proteasome. In turn, free NF-kappa-B is translocated into the nucleus and activates the transcription of hundreds of genes involved in immune response, growth control, or protection against apoptosis. In addition to the NF-kappa-B inhibitors, phosphorylates several other components of the signaling pathway including NEMO/IKBKG, NF-kappa-B subunits RELA and NFKB1, as well as IKK-related kinases TBK1 and IKBKE. IKK-related kinase phosphorylations may prevent the overproduction of inflammatory mediators since they exert a negative regulation on canonical IKKs. Phosphorylates FOXO3, mediating the TNF-dependent inactivation of this pro-apoptotic transcription factor. Also phosphorylates other substrates including NAA10, NCOA3, BCL10 and IRS1. Phosphorylates RIPK1 at 'Ser-25' which represses its kinase activity and consequently prevents TNF-mediated RIPK1-dependent cell death. Phosphorylates the C-terminus of IRF5, stimulating IRF5 homodimerization and translocation into the nucleus. The sequence is that of Inhibitor of nuclear factor kappa-B kinase subunit beta (IKBKB) from Bos taurus (Bovine).